The chain runs to 142 residues: Translation initiation factor 2 subunit beta (142 aa).

Belongs to the eIF-2-beta/eIF-5 family. Heterotrimer composed of an alpha, a beta and a gamma chain.

In terms of biological role, eIF-2 functions in the early steps of protein synthesis by forming a ternary complex with GTP and initiator tRNA. In Staphylothermus marinus (strain ATCC 43588 / DSM 3639 / JCM 9404 / F1), this protein is Translation initiation factor 2 subunit beta.